The primary structure comprises 147 residues: Transmembrane protein 210 (147 aa).

The N-terminal stretch at 1 to 31 (MAPGPWPVSCLRGGPLGLTYLSLLLIPAAAG) is a signal peptide. At 32 to 47 (TYCECSLGLSREALIA) the chain is on the extracellular side. Residues 48–68 (LLVVLAGISASCFCALVIVAI) form a helical membrane-spanning segment. Over 69-147 (GVLRAKGETC…PPPPPPLPPE (79 aa)) the chain is Cytoplasmic. Residues 128-147 (AIPMEASSEEPPPPPPLPPE) are disordered. Positions 137–147 (EPPPPPPLPPE) are enriched in pro residues.

The protein resides in the membrane. Its subcellular location is the cytoplasmic vesicle. The protein localises to the secretory vesicle. It localises to the acrosome. The polypeptide is Transmembrane protein 210 (TMEM210) (Homo sapiens (Human)).